A 116-amino-acid polypeptide reads, in one-letter code: Ribulose bisphosphate carboxylase small subunit 1 (116 aa).

The protein belongs to the RuBisCO small chain family. Heterohexadecamer of 8 large and 8 small subunits.

It is found in the cytoplasm. RuBisCO catalyzes two reactions: the carboxylation of D-ribulose 1,5-bisphosphate, the primary event in carbon dioxide fixation, as well as the oxidative fragmentation of the pentose substrate. Both reactions occur simultaneously and in competition at the same active site. Although the small subunit is not catalytic it is essential for maximal activity. In terms of biological role, can replace the endogenous type I ccbS gene in H.neapolitanus, reconstituting RuBisCO with about 10% of normal activity; the active enzyme is targeted to carboxysomes. This chain is Ribulose bisphosphate carboxylase small subunit 1, found in Hydrogenovibrio crunogenus (strain DSM 25203 / XCL-2) (Thiomicrospira crunogena).